Here is a 75-residue protein sequence, read N- to C-terminus: Putative membrane protein insertion efficiency factor 2 (75 aa).

The protein belongs to the UPF0161 family.

It is found in the cell membrane. Could be involved in insertion of integral membrane proteins into the membrane. This chain is Putative membrane protein insertion efficiency factor 2, found in Bacillus licheniformis (strain ATCC 14580 / DSM 13 / JCM 2505 / CCUG 7422 / NBRC 12200 / NCIMB 9375 / NCTC 10341 / NRRL NRS-1264 / Gibson 46).